Consider the following 446-residue polypeptide: MQPVNIIGGGLAGSEAAWQLASRQIPVRLFEMRGREKTPAHSTDKLAELVCSNSFRSDDPNSNAVGVLHAEMRKMGSLIMMIADQHRVPAGSALAVDREGFAEAVTNRLQNHPLIEIHRERIDHIPDETTIIASGPLTSDSLANAITELTGRDALSFFDAIAPIVYRDSIDMDIAWFQSRWDKGDGHDYINCPLNKEEYLAFHAALLAGEKGDFHEWEKDTPYFEGCMPIEVMADRGIDTLRFGPMKPVGLDDPRTGRWPYGAVQLRQDNALGTLWNMVGFQTKLKYAEQIRIFRMIPGLEKAEFARLGGMHRNSFIRSPVLLDEYLRLKKQTNIRFAGQITGCEGYIESASIGLLAGIFTAADKLDKKVSSPPVESALGALLGHITKNADPDHYQPMNINFGLFPPISEKHPKKQRKAMMAERARKALDQWISEEAFLKSSILEQ.

FAD is bound at residue 8–13 (GGGLAG).

The protein belongs to the MnmG family. TrmFO subfamily. Requires FAD as cofactor.

The protein resides in the cytoplasm. The catalysed reaction is uridine(54) in tRNA + (6R)-5,10-methylene-5,6,7,8-tetrahydrofolate + NADH + H(+) = 5-methyluridine(54) in tRNA + (6S)-5,6,7,8-tetrahydrofolate + NAD(+). The enzyme catalyses uridine(54) in tRNA + (6R)-5,10-methylene-5,6,7,8-tetrahydrofolate + NADPH + H(+) = 5-methyluridine(54) in tRNA + (6S)-5,6,7,8-tetrahydrofolate + NADP(+). Its function is as follows. Catalyzes the folate-dependent formation of 5-methyl-uridine at position 54 (M-5-U54) in all tRNAs. This Zymomonas mobilis subsp. mobilis (strain ATCC 31821 / ZM4 / CP4) protein is Methylenetetrahydrofolate--tRNA-(uracil-5-)-methyltransferase TrmFO.